We begin with the raw amino-acid sequence, 673 residues long: Polyadenylate-binding protein, cytoplasmic and nuclear (673 aa).

Residues 1–39 are disordered; that stretch reads MSAETATSPAPAAETPVAPAPATQTTPAEGAPTPAAAAP. RRM domains lie at 46–124, 134–211, 227–304, and 330–407; these read ASLY…WSQR, GNIF…HHVG, TNVY…RAQT, and VNLY…LAQR. The segment at 300–322 is disordered; it reads GRAQTKSEREAELKKSHEEKRLE. The span at 304–322 shows a compositional bias: basic and acidic residues; that stretch reads TKSEREAELKKSHEEKRLE. Disordered stretches follow at residues 509 to 572 and 644 to 673; these read APGY…AGRL and WGKD…EKKE. The region spanning 569-646 is the PABC domain; that stretch reads AGRLDAQSLA…ALRVLAEWGK (78 aa).

The protein belongs to the polyadenylate-binding protein type-1 family.

The protein resides in the cytoplasm. The protein localises to the nucleus. Its function is as follows. Binds the poly(A) tail of mRNA. Appears to be an important mediator of the multiple roles of the poly(A) tail in mRNA biogenesis, stability and translation. In the nucleus, involved in both mRNA cleavage and polyadenylation. Is also required for efficient mRNA export to the cytoplasm. Acts in concert with a poly(A)-specific nuclease (PAN) to affect poly(A) tail shortening, which may occur concomitantly with either nucleocytoplasmic mRNA transport or translational initiation. In the cytoplasm, stimulates translation initiation and regulates mRNA decay through translation termination-coupled poly(A) shortening, probably mediated by PAN. The polypeptide is Polyadenylate-binding protein, cytoplasmic and nuclear (PAB1) (Cryptococcus neoformans var. neoformans serotype D (strain B-3501A) (Filobasidiella neoformans)).